The primary structure comprises 163 residues: Phosphopantetheine adenylyltransferase (163 aa).

Position 9 (threonine 9) interacts with substrate. ATP contacts are provided by residues 9-10 and histidine 17; that span reads TF. Residues lysine 41, leucine 73, and arginine 87 each contribute to the substrate site. ATP-binding positions include 88 to 90, glutamate 98, and 123 to 129; these read GLR and YQFISGT.

Belongs to the bacterial CoaD family. As to quaternary structure, homohexamer. Requires Mg(2+) as cofactor.

It is found in the cytoplasm. It carries out the reaction (R)-4'-phosphopantetheine + ATP + H(+) = 3'-dephospho-CoA + diphosphate. The protein operates within cofactor biosynthesis; coenzyme A biosynthesis; CoA from (R)-pantothenate: step 4/5. In terms of biological role, reversibly transfers an adenylyl group from ATP to 4'-phosphopantetheine, yielding dephospho-CoA (dPCoA) and pyrophosphate. This chain is Phosphopantetheine adenylyltransferase, found in Herminiimonas arsenicoxydans.